The sequence spans 116 residues: Protein Wnt-5(I) (116 aa).

Residue S1 is the site of O-palmitoleoyl serine; by PORCN attachment. N69 carries an N-linked (GlcNAc...) asparagine glycan. Residues C82 and C97 are joined by a disulfide bond.

Belongs to the Wnt family. In terms of processing, palmitoleoylation is required for efficient binding to frizzled receptors. Depalmitoleoylation leads to Wnt signaling pathway inhibition.

It localises to the secreted. Its subcellular location is the extracellular space. It is found in the extracellular matrix. Its function is as follows. Ligand for members of the frizzled family of seven transmembrane receptors. Probable developmental protein. May be a signaling molecule which affects the development of discrete regions of tissues. Is likely to signal over only few cell diameters. This is Protein Wnt-5(I) (WNT-5(I)) from Eptatretus stoutii (Pacific hagfish).